A 1847-amino-acid polypeptide reads, in one-letter code: Replication factor C small subunit (1847 aa).

DOD-type homing endonuclease domains are found at residues 179–311 (WLGY…RFGI), 780–927 (MLGL…ISGI), and 1348–1508 (LLGF…EFEV).

It belongs to the activator 1 small subunits family. RfcS subfamily. As to quaternary structure, heteromultimer composed of small subunits (RfcS) and large subunits (RfcL). This protein undergoes a protein self splicing that involves a post-translational excision of the intervening region (intein) followed by peptide ligation.

In terms of biological role, part of the RFC clamp loader complex which loads the PCNA sliding clamp onto DNA. In Methanocaldococcus jannaschii (strain ATCC 43067 / DSM 2661 / JAL-1 / JCM 10045 / NBRC 100440) (Methanococcus jannaschii), this protein is Replication factor C small subunit (rfcS).